Consider the following 487-residue polypeptide: Histamine H1 receptor (487 aa).

Over M1–P29 the chain is Extracellular. 2 N-linked (GlcNAc...) asparagine glycosylation sites follow: N5 and N18. Residues L30 to Y50 form a helical membrane-spanning segment. The Cytoplasmic portion of the chain corresponds to A51–L64. Residues Y65–L89 form a helical membrane-spanning segment. At M90–R97 the chain is on the extracellular side. The chain crosses the membrane as a helical span at residues P98–I123. C100 and C180 form a disulfide bridge. D107 and T112 together coordinate histamine. The interval D107–T112 is important for agonist binding. Residues D124–A144 are Cytoplasmic-facing. Residues T140 and T142 each carry the phosphothreonine modification. Residues S145 to G164 form a helical membrane-spanning segment. The Extracellular segment spans residues W165–T188. Residues W189–A211 form a helical membrane-spanning segment. Residue N198 coordinates histamine. Residues K212–Q416 are Cytoplasmic-facing. S230 carries the post-translational modification Phosphoserine. Over residues K238–K261 the composition is skewed to basic and acidic residues. The disordered stretch occupies residues K238–P286. T279 is modified (phosphothreonine). Phosphoserine is present on residues S344 and S347. Positions E345–G379 are disordered. The segment covering G353–T369 has biased composition (polar residues). Phosphoserine occurs at positions 380, 396, and 398. Residues L417–F440 form a helical membrane-spanning segment. Residues F424–W428 form an important for agonist binding region. Position 431 (Y431) interacts with histamine. A disulfide bridge connects residues C441 and C444. The Extracellular portion of the chain corresponds to C441–N446. A helical membrane pass occupies residues E447–P469. Residues L470–S487 are Cytoplasmic-facing.

The protein belongs to the G-protein coupled receptor 1 family. In terms of processing, phosphorylation at sites in the second and third cytoplasmic loops independently contribute to agonist-induced receptor down-regulation.

It localises to the cell membrane. Functionally, G-protein-coupled receptor for histamine, a biogenic amine that functions as an immune modulator and a neurotransmitter. Through the H1 receptor, histamine mediates the contraction of smooth muscles and increases capillary permeability due to contraction of terminal venules. Also mediates neurotransmission in the central nervous system and thereby regulates circadian rhythms, emotional and locomotor activities as well as cognitive functions. The protein is Histamine H1 receptor of Pongo pygmaeus (Bornean orangutan).